The chain runs to 598 residues: Nuclear receptor subfamily 4 group A member 2 (598 aa).

The interval 1-22 is disordered; the sequence is MPCVQAQYGSSPQGASPASQSY. Over residues 8 to 22 the composition is skewed to low complexity; it reads YGSSPQGASPASQSY. A DNA-binding region (nuclear receptor) is located at residues 260-335; sequence EGLCAVCGDN…VGMVKEVVRT (76 aa). 2 consecutive NR C4-type zinc fingers follow at residues 263–283 and 299–323; these read CAVC…CEGC and CLAN…FQKC. The Bipartite nuclear localization signal (NLS1) signature appears at 287–314; it reads FKRTVQKNAKYVCLANKNCPVDKRRRNR. Residues 337 to 361 form a disordered region; that stretch reads SLKGRRGRLPSKPKSPQDPSPPSPP. A Nuclear localization signal (NLS1) motif is present at residues 338-350; sequence LKGRRGRLPSKPK. A compositionally biased stretch (pro residues) spans 352–361; it reads PQDPSPPSPP. Residues 360–595 form the NR LBD domain; the sequence is PPVSLISALV…AIIDKLFLDT (236 aa). Positions 443 to 452 match the nuclear export sequence (NES1) motif; that stretch reads FLELFVLRLA. Positions 568–577 match the nuclear export sequence (NES2) motif; it reads QGLQRIFYLK.

The protein belongs to the nuclear hormone receptor family. NR4 subfamily. As to quaternary structure, interacts with SFPQ, NCOR2, SIN3A and HADC1. The interaction with NCOR2 increases in the absence of PITX3. Interacts with PER2. Brain.

Its subcellular location is the cytoplasm. The protein localises to the nucleus. Its function is as follows. Transcriptional regulator which is important for the differentiation and maintenance of meso-diencephalic dopaminergic (mdDA) neurons during development. It is crucial for expression of a set of genes such as SLC6A3, SLC18A2, TH and DRD2 which are essential for development of mdDA neurons. This is Nuclear receptor subfamily 4 group A member 2 (Nr4a2) from Mus musculus (Mouse).